We begin with the raw amino-acid sequence, 167 residues long: Putative peroxiredoxin-A (167 aa).

The region spanning 4-167 is the Thioredoxin domain; that stretch reads IKRGDRFPTT…STAQKIIAKL (164 aa). The active-site Cysteine sulfenic acid (-SOH) intermediate is the Cys53. The short motif at 165 to 167 is the Microbody targeting signal element; sequence AKL.

The protein belongs to the peroxiredoxin family. Prx5 subfamily.

The protein localises to the peroxisome membrane. It carries out the reaction a hydroperoxide + [thioredoxin]-dithiol = an alcohol + [thioredoxin]-disulfide + H2O. Functionally, thiol-specific peroxidase that catalyzes the reduction of hydrogen peroxide and organic hydroperoxides to water and alcohols, respectively. Plays a role in cell protection against oxidative stress by detoxifying peroxides and as sensor of hydrogen peroxide-mediated signaling events. The polypeptide is Putative peroxiredoxin-A (PMPA) (Candida boidinii (Yeast)).